The following is a 25-amino-acid chain: Caerin-2.2 (25 aa).

The protein belongs to the frog skin active peptide (FSAP) family. Caerin subfamily. As to expression, expressed by the skin parotoid and/or rostral glands.

It is found in the secreted. Its function is as follows. Antimicrobial peptide, that adopts an alpha helical conformation which can disrupt bacterial membranes. Each caerin displays a different antimicrobial specificity. The sequence is that of Caerin-2.2 from Ranoidea caerulea (Green tree frog).